The primary structure comprises 220 residues: Peptide methionine sulfoxide reductase MsrA (220 aa).

The active site involves C54.

This sequence belongs to the MsrA Met sulfoxide reductase family.

The enzyme catalyses L-methionyl-[protein] + [thioredoxin]-disulfide + H2O = L-methionyl-(S)-S-oxide-[protein] + [thioredoxin]-dithiol. The catalysed reaction is [thioredoxin]-disulfide + L-methionine + H2O = L-methionine (S)-S-oxide + [thioredoxin]-dithiol. In terms of biological role, has an important function as a repair enzyme for proteins that have been inactivated by oxidation. Catalyzes the reversible oxidation-reduction of methionine sulfoxide in proteins to methionine. This Salinispora tropica (strain ATCC BAA-916 / DSM 44818 / JCM 13857 / NBRC 105044 / CNB-440) protein is Peptide methionine sulfoxide reductase MsrA.